Reading from the N-terminus, the 350-residue chain is MVNVSITTDYSRMLFMRNTKSTLKIAIIGYGSQGRAHALNLRDSGFDIIVGLRPGGATEAKAQADGFTVQSPDQAAKHADLVAVLTPDMVQKKLYEEVLAPNIKQGACLLFAHGLNVHYSLITPRSDLDVVLVAPKGPGALVRREYEIGRGVPCIYAVHQDLSSHAEQLALTYAGGLGGARANIIKTTFKEETETDLFGEQAVLCGGVSSLVQAGFETLVEAGYQPEIAYYEVLHELKLIVDLFYEGGITRMLEFVSETAQYGDYVSGPRVIDRSTKERMKAVLKDIQDGTFTKHWIAEYQAGLPNYKKYKQADLEHPIEKVGKQLRAKMVWLNSEKTNDTTHPMSSKVV.

Residues 4-187 form the KARI N-terminal Rossmann domain; that stretch reads VSITTDYSRM…GGARANIIKT (184 aa). NADP(+) is bound by residues 30–33, arginine 53, threonine 58, and 88–91; these read YGSQ and DMVQ. Residue histidine 113 is part of the active site. Glycine 139 lines the NADP(+) pocket. In terms of domain architecture, KARI C-terminal knotted spans 188–333; that stretch reads TFKEETETDL…KQLRAKMVWL (146 aa). 4 residues coordinate Mg(2+): aspartate 196, glutamate 200, glutamate 232, and glutamate 236. Substrate is bound at residue serine 257.

This sequence belongs to the ketol-acid reductoisomerase family. Mg(2+) is required as a cofactor.

The catalysed reaction is (2R)-2,3-dihydroxy-3-methylbutanoate + NADP(+) = (2S)-2-acetolactate + NADPH + H(+). The enzyme catalyses (2R,3R)-2,3-dihydroxy-3-methylpentanoate + NADP(+) = (S)-2-ethyl-2-hydroxy-3-oxobutanoate + NADPH + H(+). It participates in amino-acid biosynthesis; L-isoleucine biosynthesis; L-isoleucine from 2-oxobutanoate: step 2/4. Its pathway is amino-acid biosynthesis; L-valine biosynthesis; L-valine from pyruvate: step 2/4. Involved in the biosynthesis of branched-chain amino acids (BCAA). Catalyzes an alkyl-migration followed by a ketol-acid reduction of (S)-2-acetolactate (S2AL) to yield (R)-2,3-dihydroxy-isovalerate. In the isomerase reaction, S2AL is rearranged via a Mg-dependent methyl migration to produce 3-hydroxy-3-methyl-2-ketobutyrate (HMKB). In the reductase reaction, this 2-ketoacid undergoes a metal-dependent reduction by NADPH to yield (R)-2,3-dihydroxy-isovalerate. This is Ketol-acid reductoisomerase (NADP(+)) from Xylella fastidiosa (strain Temecula1 / ATCC 700964).